A 403-amino-acid chain; its full sequence is Putative gustatory receptor 98b (403 aa).

Residues 1-11 (MVAQKSRLLAR) lie on the Cytoplasmic side of the membrane. Residues 12–32 (AFPYLDIFSVFALTPPPQSFG) traverse the membrane as a helical segment. The Extracellular segment spans residues 33–48 (HTPHRRLRWYLMTGYV). The helical transmembrane segment at 49–69 (FYATAILATVFIVSYFNIIAI) threads the bilayer. Over 70–83 (DEEVLEYNVSDFTR) the chain is Cytoplasmic. The helical transmembrane segment at 84–104 (VMGNIQKSLYSIMAIANHLNM) threads the bilayer. At 105 to 144 (LINYRRLGGIYKDIADLEMDMDEASQCFGGQRQRFSFRFR) the chain is on the extracellular side. A helical membrane pass occupies residues 145–165 (MALCVGVWMILMVGSMPRLTM). At 166–191 (TAMGPFVSTLLKILTEFVMIMQQLKS) the chain is on the cytoplasmic side. A helical transmembrane segment spans residues 192 to 212 (LEYCVFVLIIYELVLRLRRTL). Over 213 to 259 (SQLQEEFQDCEQQDMLQALCVALKRNQLLLGRIWRLEGDVGSYFTPT) the chain is Extracellular. The helical transmembrane segment at 260-280 (MLLLFLYNGLTILHMVNWAYI) threads the bilayer. Residues 281–365 (NKFLYDSCCQ…LRFTCGGLFD (85 aa)) are Cytoplasmic-facing. Residues 366 to 386 (INLKYFGGLLVTIFGYIIILI) form a helical membrane-spanning segment. Residues 387–403 (QFKVQAIAANRYKKVVN) are Extracellular-facing.

Belongs to the insect chemoreceptor superfamily. Gustatory receptor (GR) family. Gr2a subfamily.

The protein localises to the cell membrane. In terms of biological role, probable gustatory receptor which mediates acceptance or avoidance behavior, depending on its substrates. This chain is Putative gustatory receptor 98b (Gr98b), found in Drosophila melanogaster (Fruit fly).